We begin with the raw amino-acid sequence, 342 residues long: Holliday junction branch migration complex subunit RuvB (342 aa).

Positions 1 to 185 (MTVKPLRDVT…FPIQERLEYY (185 aa)) are large ATPase domain (RuvB-L). ATP is bound by residues Leu24, Arg25, Gly66, Lys69, Thr70, Ser71, 132–134 (EDY), Arg175, Tyr185, and Arg222. Residue Thr70 participates in Mg(2+) binding. Residues 186 to 256 (GPAELKEIAV…VVDRTLRRLE (71 aa)) are small ATPAse domain (RuvB-S). Residues 259-342 (ARGLDAMDRR…RSGGKQGSLV (84 aa)) are head domain (RuvB-H). Positions 314 and 319 each coordinate DNA.

It belongs to the RuvB family. Homohexamer. Forms an RuvA(8)-RuvB(12)-Holliday junction (HJ) complex. HJ DNA is sandwiched between 2 RuvA tetramers; dsDNA enters through RuvA and exits via RuvB. An RuvB hexamer assembles on each DNA strand where it exits the tetramer. Each RuvB hexamer is contacted by two RuvA subunits (via domain III) on 2 adjacent RuvB subunits; this complex drives branch migration. In the full resolvosome a probable DNA-RuvA(4)-RuvB(12)-RuvC(2) complex forms which resolves the HJ.

The protein localises to the cytoplasm. The enzyme catalyses ATP + H2O = ADP + phosphate + H(+). Its function is as follows. The RuvA-RuvB-RuvC complex processes Holliday junction (HJ) DNA during genetic recombination and DNA repair, while the RuvA-RuvB complex plays an important role in the rescue of blocked DNA replication forks via replication fork reversal (RFR). RuvA specifically binds to HJ cruciform DNA, conferring on it an open structure. The RuvB hexamer acts as an ATP-dependent pump, pulling dsDNA into and through the RuvAB complex. RuvB forms 2 homohexamers on either side of HJ DNA bound by 1 or 2 RuvA tetramers; 4 subunits per hexamer contact DNA at a time. Coordinated motions by a converter formed by DNA-disengaged RuvB subunits stimulates ATP hydrolysis and nucleotide exchange. Immobilization of the converter enables RuvB to convert the ATP-contained energy into a lever motion, pulling 2 nucleotides of DNA out of the RuvA tetramer per ATP hydrolyzed, thus driving DNA branch migration. The RuvB motors rotate together with the DNA substrate, which together with the progressing nucleotide cycle form the mechanistic basis for DNA recombination by continuous HJ branch migration. Branch migration allows RuvC to scan DNA until it finds its consensus sequence, where it cleaves and resolves cruciform DNA. The polypeptide is Holliday junction branch migration complex subunit RuvB (Anaeromyxobacter dehalogenans (strain 2CP-C)).